The following is a 158-amino-acid chain: 3-dehydroquinate dehydratase (158 aa).

Residue Tyr22 is the Proton acceptor of the active site. Asn74, His80, and Asp87 together coordinate substrate. Residue His100 is the Proton donor of the active site. Substrate is bound by residues 101-102 (IS) and Arg111.

The protein belongs to the type-II 3-dehydroquinase family. In terms of assembly, homododecamer.

It catalyses the reaction 3-dehydroquinate = 3-dehydroshikimate + H2O. It functions in the pathway metabolic intermediate biosynthesis; chorismate biosynthesis; chorismate from D-erythrose 4-phosphate and phosphoenolpyruvate: step 3/7. In terms of biological role, catalyzes a trans-dehydration via an enolate intermediate. This Helicobacter hepaticus (strain ATCC 51449 / 3B1) protein is 3-dehydroquinate dehydratase.